The sequence spans 313 residues: Protein sprouty homolog 1 (313 aa).

Methionine 1 carries the N-acetylmethionine modification. The tract at residues 43–152 is disordered; sequence QIKAIRGSNE…RSDRVIRTQP (110 aa). Residues 69 to 79 show a composition bias toward basic and acidic residues; sequence PRPEKQERTHE. Low complexity predominate over residues 106-125; that stretch reads SRSTSTGSAASSGSSSSVSS. Positions 177-289 constitute an SPR domain; that stretch reads QCGKCKCGEC…CYDWTHRPGC (113 aa).

It belongs to the sprouty family. As to quaternary structure, forms heterodimers with SPRY2. Interacts with TESK1. Interacts with CAV1 (via C-terminus).

It is found in the cytoplasm. The protein resides in the membrane. Inhibits fibroblast growth factor (FGF)-induced retinal lens fiber differentiation, probably by inhibiting FGF-mediated phosphorylation of ERK1/2. Inhibits TGFB-induced epithelial-to-mesenchymal transition in lens epithelial cells. The sequence is that of Protein sprouty homolog 1 (Spry1) from Mus musculus (Mouse).